The primary structure comprises 462 residues: Phospho-2-dehydro-3-deoxyheptonate aldolase AroG (462 aa).

Cys87 serves as a coordination point for Mn(2+). Residues Arg126, 283-284 (ER), Lys306, and Arg337 contribute to the phosphoenolpyruvate site. Positions 369, 411, and 441 each coordinate Mn(2+).

In terms of assembly, homodimer. Interacts with Rv0948c. Requires Mn(2+) as cofactor. The cofactor is Co(2+). Cd(2+) is required as a cofactor.

The catalysed reaction is D-erythrose 4-phosphate + phosphoenolpyruvate + H2O = 7-phospho-2-dehydro-3-deoxy-D-arabino-heptonate + phosphate. Its pathway is metabolic intermediate biosynthesis; chorismate biosynthesis; chorismate from D-erythrose 4-phosphate and phosphoenolpyruvate: step 1/7. Feedback inhibited by tryptophan, tyrosine, phenylalanine and chorismate. Catalyzes an aldol-like condensation reaction between phosphoenolpyruvate (PEP) and D-erythrose 4-phosphate (E4P) to generate 3-deoxy-D-arabino-heptulosonate 7-phosphate (DAH7P) and inorganic phosphate. The chain is Phospho-2-dehydro-3-deoxyheptonate aldolase AroG (aroG) from Mycobacterium tuberculosis (strain ATCC 25618 / H37Rv).